A 172-amino-acid polypeptide reads, in one-letter code: Myosin regulatory light chain 2, smooth muscle minor isoform (172 aa).

Ser2 carries the N-acetylserine modification. Thr19 carries the post-translational modification Phosphothreonine; by MLCK. Position 20 is a phosphoserine; by MLCK (Ser20). EF-hand domains are found at residues 29–64, 98–133, and 134–169; these read SQIQ…LGKN, DPED…MGDR, and FTDE…GAKD. Ca(2+) contacts are provided by Asp42, Asn44, Asp46, and Asp53.

As to quaternary structure, myosin is a hexamer of 2 heavy chains and 4 light chains. Phosphorylation increases the actin-activated myosin ATPase activity and thereby regulates the contractile activity.

Myosin regulatory subunit that plays an important role in regulation of both smooth muscle and nonmuscle cell contractile activity. Implicated in cytokinesis, receptor capping, and cell locomotion. The polypeptide is Myosin regulatory light chain 2, smooth muscle minor isoform (Gallus gallus (Chicken)).